Reading from the N-terminus, the 660-residue chain is Tripartite terminase subunit 3 (660 aa).

Residues 203–210 (VPRRHGKT) carry the Walker A motif motif. Residues 294-299 (ILLVDE) carry the Walker B motif motif. E299 serves as the catalytic For ATPase activity. Active-site for nuclease activity residues include D452, E523, and D637.

The protein belongs to the herpesviridae TRM3 protein family. As to quaternary structure, interacts with the terminase subunits TRM1 and TRM2. Interacts with portal protein.

It localises to the host nucleus. Its function is as follows. Component of the molecular motor that translocates viral genomic DNA in empty capsid during DNA packaging. Forms a tripartite terminase complex together with TRM1 and TRM2 in the host cytoplasm. Once the complex reaches the host nucleus, it interacts with the capsid portal vertex. This portal forms a ring in which genomic DNA is translocated into the capsid. TRM3 carries an RNase H-like nuclease activity that plays an important role for the cleavage of concatemeric viral DNA into unit length genomes. The sequence is that of Tripartite terminase subunit 3 from Elephas maximus (Indian elephant).